The primary structure comprises 849 residues: Coiled-coil domain-containing protein 87 (849 aa).

Positions 387 to 415 (RHPAAGHRLEELEKMLRNLQEEEASGQWD) form a coiled coil.

This sequence belongs to the CCDC87 family.

Functionally, plays a role in spermatogenesis, where it is important for normal sperm head morphology. Also required for the acrosome reaction and thus normal male fertility. The protein is Coiled-coil domain-containing protein 87 (CCDC87) of Homo sapiens (Human).